Consider the following 77-residue polypeptide: Putative defensin-like protein 187 (77 aa).

The signal sequence occupies residues 1–19 (MKNSSIMFVLIVVFLISSS). Disulfide bonds link C31/C77, C43/C71, and C47/C73.

It belongs to the DEFL family.

Its subcellular location is the secreted. In Arabidopsis thaliana (Mouse-ear cress), this protein is Putative defensin-like protein 187 (LCR42).